Consider the following 288-residue polypeptide: Translocon-associated protein subunit alpha (288 aa).

A signal peptide spans 1–28; sequence MFNFGSKILVLFLVAFPCGLISFGRVSA. At 29–208 the chain is on the lumenal side; the sequence is DSESAEDIFP…ELEEGLDGET (180 aa). The disordered stretch occupies residues 34–69; sequence EDIFPDSTVDEEEEEEEDEVLVEEDQVPGSETEDDI. N-linked (GlcNAc...) asparagine glycans are attached at residues Asn137 and Asn192. The chain crosses the membrane as a helical span at residues 209–229; sequence IFMYIFLTGLVVLAVFGMYQV. The Cytoplasmic segment spans residues 230–288; that stretch reads LESRTRKRFPVKVETGTGGMNGVDISWIPQETLNIMSKASASPKASPRKRTKRAVGVDQ. The tract at residues 267–288 is disordered; that stretch reads KASASPKASPRKRTKRAVGVDQ.

It belongs to the TRAP-alpha family. As to quaternary structure, heterotetramer of TRAP-alpha, TRAP-beta, TRAP-delta and TRAP-gamma. In terms of processing, phosphorylated in its cytoplasmic tail.

The protein resides in the endoplasmic reticulum membrane. In terms of biological role, TRAP proteins are part of a complex whose function is to bind calcium to the ER membrane and thereby regulate the retention of ER resident proteins. May be involved in the recycling of the translocation apparatus after completion of the translocation process or may function as a membrane-bound chaperone facilitating folding of translocated proteins. The protein is Translocon-associated protein subunit alpha (ssr1) of Oncorhynchus mykiss (Rainbow trout).